Here is a 136-residue protein sequence, read N- to C-terminus: Small ribosomal subunit protein uS8c (136 aa).

The protein belongs to the universal ribosomal protein uS8 family. As to quaternary structure, part of the 30S ribosomal subunit.

The protein resides in the plastid. Its subcellular location is the chloroplast. One of the primary rRNA binding proteins, it binds directly to 16S rRNA central domain where it helps coordinate assembly of the platform of the 30S subunit. This is Small ribosomal subunit protein uS8c (rps8) from Citrus sinensis (Sweet orange).